Reading from the N-terminus, the 128-residue chain is Ribonuclease P protein component (128 aa).

It belongs to the RnpA family. Consists of a catalytic RNA component (M1 or rnpB) and a protein subunit.

The enzyme catalyses Endonucleolytic cleavage of RNA, removing 5'-extranucleotides from tRNA precursor.. In terms of biological role, RNaseP catalyzes the removal of the 5'-leader sequence from pre-tRNA to produce the mature 5'-terminus. It can also cleave other RNA substrates such as 4.5S RNA. The protein component plays an auxiliary but essential role in vivo by binding to the 5'-leader sequence and broadening the substrate specificity of the ribozyme. In Prochlorococcus marinus (strain MIT 9312), this protein is Ribonuclease P protein component.